A 968-amino-acid polypeptide reads, in one-letter code: A disintegrin and metalloproteinase with thrombospondin motifs 1 (968 aa).

Disordered regions lie at residues 1-23 (MQPKVPLGSRKQKPCSDMGDVQR) and 177-253 (APAV…RKKR). A signal peptide spans 1-48 (MQPKVPLGSRKQKPCSDMGDVQRAARSRGSLSAHMLLLLLASITMLLC). Positions 49 to 253 (ARGAHGRPTE…SGPGSIRKKR (205 aa)) are excised as a propeptide. The short motif at 204 to 211 (AKCGVMDD) is the Cysteine switch element. Cys206 is a binding site for Zn(2+). Polar residues predominate over residues 214-229 (LPTSDSRPESQNTRNQ). A Peptidase M12B domain is found at 259 to 468 (RYVETMLVAD…GHGECLMDKP (210 aa)). Residues Glu262, Asp345, and Asp352 each coordinate Ca(2+). Disulfide bonds link Cys334-Cys386, Cys363-Cys368, Cys380-Cys463, and Cys418-Cys447. His402 contacts Zn(2+). The active site involves Glu403. 2 residues coordinate Zn(2+): His406 and His412. 2 residues coordinate Ca(2+): Cys463 and Asp466. The Disintegrin domain occupies 477–559 (DLPGTLYDAN…TDMKHFATPV (83 aa)). 4 disulfide bridges follow: Cys489/Cys512, Cys500/Cys522, Cys507/Cys541, and Cys535/Cys546. N-linked (GlcNAc...) asparagine glycosylation is present at Asn548. The 56-residue stretch at 560-615 (HGSWGPWGPWGDCSRTCGGGVQYTMRECDNPVPKNGGKYCEGKRVRYRSCNIEDCP) folds into the TSP type-1 1 domain. Disulfide bonds link Cys572–Cys609, Cys576–Cys614, and Cys587–Cys599. N-linked (GlcNAc...) asparagine glycosylation is found at Asn721, Asn765, and Asn783. The spacer stretch occupies residues 726-850 (KKMSGIVTST…YFMKKKTESF (125 aa)). TSP type-1 domains follow at residues 855–911 (TFSE…LPCP) and 912–968 (HWQV…TQCS). The N-linked (GlcNAc...) asparagine glycan is linked to Asn946.

Zn(2+) serves as cofactor. The precursor is cleaved by a furin endopeptidase. In terms of processing, glycosylated. Can be O-fucosylated by POFUT2 on a serine or a threonine residue found within the consensus sequence C1-X(2)-(S/T)-C2-G of the TSP type-1 repeat domains where C1 and C2 are the first and second cysteine residue of the repeat, respectively. Fucosylated repeats can then be further glycosylated by the addition of a beta-1,3-glucose residue by the glucosyltransferase, B3GALTL. Fucosylation mediates the efficient secretion of ADAMTS family members. Can also be C-glycosylated with one or two mannose molecules on tryptophan residues within the consensus sequence W-X-X-W of the TPRs, and N-glycosylated. These other glycosylations can also facilitate secretion.

It is found in the secreted. It localises to the extracellular space. The protein resides in the extracellular matrix. Functionally, metalloprotease which cleaves aggrecan, a cartilage proteoglycan, at the '1691-Glu-|-Leu-1692' site (within the chondroitin sulfate attachment domain), and may be involved in its turnover. Also cleaves COMP. Has angiogenic inhibitor activity. May play a critical role in follicular rupture. The chain is A disintegrin and metalloproteinase with thrombospondin motifs 1 (Adamts1) from Mus musculus (Mouse).